Reading from the N-terminus, the 242-residue chain is Potassium/proton antiporter CemA (242 aa).

The next 2 helical transmembrane spans lie at 116–136 and 200–220; these read IIFC…YSIL and ISGF…YLIF.

Belongs to the CemA family.

It localises to the plastid. It is found in the chloroplast inner membrane. It catalyses the reaction K(+)(in) + H(+)(out) = K(+)(out) + H(+)(in). Its function is as follows. Contributes to K(+)/H(+) antiport activity by supporting proton efflux to control proton extrusion and homeostasis in chloroplasts in a light-dependent manner to modulate photosynthesis. Prevents excessive induction of non-photochemical quenching (NPQ) under continuous-light conditions. Indirectly promotes efficient inorganic carbon uptake into chloroplasts. The protein is Potassium/proton antiporter CemA of Chloranthus spicatus (Chulantree).